A 104-amino-acid chain; its full sequence is Large ribosomal subunit protein uL24 (104 aa).

Belongs to the universal ribosomal protein uL24 family. As to quaternary structure, part of the 50S ribosomal subunit.

One of two assembly initiator proteins, it binds directly to the 5'-end of the 23S rRNA, where it nucleates assembly of the 50S subunit. In terms of biological role, one of the proteins that surrounds the polypeptide exit tunnel on the outside of the subunit. The sequence is that of Large ribosomal subunit protein uL24 from Citrobacter koseri (strain ATCC BAA-895 / CDC 4225-83 / SGSC4696).